Here is a 220-residue protein sequence, read N- to C-terminus: MKTGIVTTLIALCLPVSVFATTLRLSTDVDLLVLDGKKVSSSLLRGADSIELDNGPHQLVFRVEKTIHLSNSEERLYISPPLVVSFNTQLINQVNFRLPRLENEREANHFDAAPRLELLDGDATPIPVKLDILAITSTAKAIDYEVEVERYNKSAKRASLPQFATMMADDSTLLSGVSELDAIPPQSQVLTEQRLKYWFKLADPQTRNTFLQWAEKQPSS.

The first 20 residues, Met1–Ala20, serve as a signal peptide directing secretion.

This sequence belongs to the UPF0319 family.

The polypeptide is UPF0319 protein YccT (Shigella flexneri serotype 5b (strain 8401)).